The chain runs to 111 residues: HTH-type transcriptional regulator SinR (111 aa).

The HTH cro/C1-type domain maps to 6-61 (IKQYRKEKGYSLSELAEKAGVAKSYLSSIERNLQTNPSIQFLEKVSAVLDVSVHTL). Residues 17–36 (LSELAEKAGVAKSYLSSIER) constitute a DNA-binding region (H-T-H motif). The Sin domain occupies 65-103 (KDETEYDGQLDSEWENLVRDAMASGVSKKQFREFLDYQK).

In terms of assembly, homotetramer. Also associates with SinI.

In terms of biological role, affects autolysin level and flagellation. This is HTH-type transcriptional regulator SinR (sinR) from Bacillus licheniformis.